A 553-amino-acid chain; its full sequence is Zinc finger CCHC domain-containing protein 8 homolog (553 aa).

The residue at position 59 (serine 59) is a Phosphoserine. The CCHC-type zinc-finger motif lies at 183-200 (SSCFNCGDTEHSLRDCTK). 2 positions are modified to phosphoserine: serine 292 and serine 347. At tyrosine 356 the chain carries Phosphotyrosine. The interval 388 to 492 (LEEETEDPPL…APSTPFKASY (105 aa)) is disordered. The segment covering 395–409 (PPLPPSVPPPQPPPP) has biased composition (pro residues). Serine 421 and serine 423 each carry phosphoserine. Polar residues-rich tracts occupy residues 444–456 (ASHN…SKSP) and 473–485 (ESGN…SAPS).

Belongs to the ZCCHC8 family.

The protein resides in the nucleus. It localises to the nucleoplasm. Its function is as follows. Scaffolding subunit of the trimeric nuclear exosome targeting (NEXT) complex, a complex that directs a subset of non-coding short-lived RNAs for exosomal degradation. The RNA exosome is fundamental for the degradation of RNA in eukaryotic nuclei. May be involved in pre-mRNA splicing. The sequence is that of Zinc finger CCHC domain-containing protein 8 homolog from Drosophila melanogaster (Fruit fly).